We begin with the raw amino-acid sequence, 201 residues long: Imidazole glycerol phosphate synthase subunit HisH 1 (201 aa).

In terms of domain architecture, Glutamine amidotransferase type-1 spans 1-201 (MIALIDYKAG…LKLLENFIRL (201 aa)). C80 acts as the Nucleophile in catalysis. Residues H183 and E185 contribute to the active site.

Heterodimer of HisH and HisF.

It is found in the cytoplasm. The catalysed reaction is 5-[(5-phospho-1-deoxy-D-ribulos-1-ylimino)methylamino]-1-(5-phospho-beta-D-ribosyl)imidazole-4-carboxamide + L-glutamine = D-erythro-1-(imidazol-4-yl)glycerol 3-phosphate + 5-amino-1-(5-phospho-beta-D-ribosyl)imidazole-4-carboxamide + L-glutamate + H(+). It catalyses the reaction L-glutamine + H2O = L-glutamate + NH4(+). Its pathway is amino-acid biosynthesis; L-histidine biosynthesis; L-histidine from 5-phospho-alpha-D-ribose 1-diphosphate: step 5/9. In terms of biological role, IGPS catalyzes the conversion of PRFAR and glutamine to IGP, AICAR and glutamate. The HisH subunit provides the glutamine amidotransferase activity that produces the ammonia necessary to HisF for the synthesis of IGP and AICAR. This chain is Imidazole glycerol phosphate synthase subunit HisH 1, found in Campylobacter jejuni (strain RM1221).